Consider the following 310-residue polypeptide: Retrotransposon Gag-like protein 4 (310 aa).

The CCHC-type zinc-finger motif lies at 278–295; it reads QLCLYCSQSGHFTRDCLA.

Functionally, involved in cognitive function in the brain, possibly via the noradrenergic system. This Homo sapiens (Human) protein is Retrotransposon Gag-like protein 4.